The primary structure comprises 66 residues: DNA gyrase inhibitor YacG (66 aa).

Residues Cys10, Cys13, Cys29, and Cys33 each contribute to the Zn(2+) site. Positions 46–66 are disordered; sequence KRIPSDVQITDSDEWSDETRY. Acidic residues predominate over residues 56–66; sequence DSDEWSDETRY.

Belongs to the DNA gyrase inhibitor YacG family. As to quaternary structure, interacts with GyrB. It depends on Zn(2+) as a cofactor.

Its function is as follows. Inhibits all the catalytic activities of DNA gyrase by preventing its interaction with DNA. Acts by binding directly to the C-terminal domain of GyrB, which probably disrupts DNA binding by the gyrase. This Sodalis glossinidius (strain morsitans) protein is DNA gyrase inhibitor YacG.